The sequence spans 177 residues: Isopentenyl-diphosphate Delta-isomerase (177 aa).

The Mn(2+) site is built by histidine 22 and histidine 28. Residues 26–160 enclose the Nudix hydrolase domain; the sequence is LRHMAISVFV…PERFTPWLRI (135 aa). Cysteine 62 is a catalytic residue. Histidine 64 is a binding site for Mn(2+). Mg(2+) is bound at residue glutamate 82. Residues glutamate 108 and glutamate 110 each coordinate Mn(2+). Residue glutamate 110 is part of the active site.

This sequence belongs to the IPP isomerase type 1 family. Requires Mg(2+) as cofactor. Mn(2+) serves as cofactor.

The protein resides in the cytoplasm. It catalyses the reaction isopentenyl diphosphate = dimethylallyl diphosphate. It participates in isoprenoid biosynthesis; dimethylallyl diphosphate biosynthesis; dimethylallyl diphosphate from isopentenyl diphosphate: step 1/1. Its pathway is porphyrin-containing compound metabolism; chlorophyll biosynthesis. Catalyzes the 1,3-allylic rearrangement of the homoallylic substrate isopentenyl (IPP) to its highly electrophilic allylic isomer, dimethylallyl diphosphate (DMAPP). The polypeptide is Isopentenyl-diphosphate Delta-isomerase (Cereibacter sphaeroides (strain KD131 / KCTC 12085) (Rhodobacter sphaeroides)).